Here is a 202-residue protein sequence, read N- to C-terminus: Glycoprotein U22 (202 aa).

The first 20 residues, 1–20 (MVPQGCSLVWVSALYVSVIA), serve as a signal peptide directing secretion. 4 N-linked (GlcNAc...) asparagine; by host glycosylation sites follow: Asn54, Asn107, Asn112, and Asn125. The chain crosses the membrane as a helical span at residues 172–192 (FVYYCISVYLFAVVVLCSCWF).

Its subcellular location is the membrane. In Homo sapiens (Human), this protein is Glycoprotein U22 (U22).